Reading from the N-terminus, the 150-residue chain is Large ribosomal subunit protein uL23 (150 aa).

Residues Met-1 to Ser-24 form a disordered region. Residues Thr-7–Lys-18 show a composition bias toward low complexity.

It belongs to the universal ribosomal protein uL23 family.

In Tetrahymena thermophila (strain SB210), this protein is Large ribosomal subunit protein uL23 (RPL23A).